The chain runs to 258 residues: 5'-nucleotidase SurE (258 aa).

A divalent metal cation is bound by residues D9, D10, S40, and N95.

Belongs to the SurE nucleotidase family. A divalent metal cation serves as cofactor.

The protein localises to the cytoplasm. The enzyme catalyses a ribonucleoside 5'-phosphate + H2O = a ribonucleoside + phosphate. Functionally, nucleotidase that shows phosphatase activity on nucleoside 5'-monophosphates. This chain is 5'-nucleotidase SurE, found in Nitratiruptor sp. (strain SB155-2).